Consider the following 404-residue polypeptide: Probable pectate lyase 18 (404 aa).

The first 20 residues, 1-20 (MSTLFFTFSLLLLAPLLVIS), serve as a signal peptide directing secretion. N-linked (GlcNAc...) asparagine glycosylation is present at Asn37. A disulfide bridge connects residues Cys159 and Cys178. A glycan (N-linked (GlcNAc...) asparagine) is linked at Asn191. Ca(2+) contacts are provided by Asp200, Asp202, Asp224, and Asp228. Arg280 is an active-site residue.

It belongs to the polysaccharide lyase 1 family. It depends on Ca(2+) as a cofactor. As to expression, predominantly found in the pistil where it is found in the outer five layers of the strands of transmitting tissue within the upper two-thirds of the style. Found at much lower levels in the anthers and vegetative organs.

It localises to the secreted. It carries out the reaction Eliminative cleavage of (1-&gt;4)-alpha-D-galacturonan to give oligosaccharides with 4-deoxy-alpha-D-galact-4-enuronosyl groups at their non-reducing ends.. The protein operates within glycan metabolism; pectin degradation; 2-dehydro-3-deoxy-D-gluconate from pectin: step 2/5. In terms of biological role, may have a role in the development of the transmitting tissue of the style and/or in the events related to pollination such as some aspect in the facilitation of compatible pollen tube growth. In Solanum lycopersicum (Tomato), this protein is Probable pectate lyase 18.